The following is a 387-amino-acid chain: Short-chain dehydrogenase/reductase family 42E member 1 (387 aa).

The active-site Proton acceptor is Y149. Residue K153 participates in NAD(+) binding. 2 helical membrane passes run 279-299 (LPIS…FVVG) and 365-385 (ILDV…LPVV).

This sequence belongs to the 3-beta-HSD family.

It is found in the membrane. In Danio rerio (Zebrafish), this protein is Short-chain dehydrogenase/reductase family 42E member 1 (sdr42e1).